A 398-amino-acid chain; its full sequence is UDP-N-acetylglucosamine--N-acetylmuramyl-(pentapeptide) pyrophosphoryl-undecaprenol N-acetylglucosamine transferase (398 aa).

UDP-N-acetyl-alpha-D-glucosamine is bound by residues 15–17, N125, R168, S196, and Q297; that span reads TGG.

This sequence belongs to the glycosyltransferase 28 family. MurG subfamily.

It localises to the cell inner membrane. The catalysed reaction is di-trans,octa-cis-undecaprenyl diphospho-N-acetyl-alpha-D-muramoyl-L-alanyl-D-glutamyl-meso-2,6-diaminopimeloyl-D-alanyl-D-alanine + UDP-N-acetyl-alpha-D-glucosamine = di-trans,octa-cis-undecaprenyl diphospho-[N-acetyl-alpha-D-glucosaminyl-(1-&gt;4)]-N-acetyl-alpha-D-muramoyl-L-alanyl-D-glutamyl-meso-2,6-diaminopimeloyl-D-alanyl-D-alanine + UDP + H(+). It functions in the pathway cell wall biogenesis; peptidoglycan biosynthesis. Its function is as follows. Cell wall formation. Catalyzes the transfer of a GlcNAc subunit on undecaprenyl-pyrophosphoryl-MurNAc-pentapeptide (lipid intermediate I) to form undecaprenyl-pyrophosphoryl-MurNAc-(pentapeptide)GlcNAc (lipid intermediate II). This is UDP-N-acetylglucosamine--N-acetylmuramyl-(pentapeptide) pyrophosphoryl-undecaprenol N-acetylglucosamine transferase from Erythrobacter litoralis (strain HTCC2594).